A 71-amino-acid polypeptide reads, in one-letter code: Small ribosomal subunit protein bS18c (71 aa).

It belongs to the bacterial ribosomal protein bS18 family. As to quaternary structure, part of the 30S ribosomal subunit.

It localises to the plastid. The protein localises to the cyanelle. The chain is Small ribosomal subunit protein bS18c (rps18) from Cyanophora paradoxa.